A 521-amino-acid chain; its full sequence is Bifunctional purine biosynthesis protein PurH (521 aa).

The region spanning 1–145 (MIKQALISVS…KNHKDVIVIC (145 aa)) is the MGS-like domain.

It belongs to the PurH family.

It catalyses the reaction (6R)-10-formyltetrahydrofolate + 5-amino-1-(5-phospho-beta-D-ribosyl)imidazole-4-carboxamide = 5-formamido-1-(5-phospho-D-ribosyl)imidazole-4-carboxamide + (6S)-5,6,7,8-tetrahydrofolate. The catalysed reaction is IMP + H2O = 5-formamido-1-(5-phospho-D-ribosyl)imidazole-4-carboxamide. The protein operates within purine metabolism; IMP biosynthesis via de novo pathway; 5-formamido-1-(5-phospho-D-ribosyl)imidazole-4-carboxamide from 5-amino-1-(5-phospho-D-ribosyl)imidazole-4-carboxamide (10-formyl THF route): step 1/1. It functions in the pathway purine metabolism; IMP biosynthesis via de novo pathway; IMP from 5-formamido-1-(5-phospho-D-ribosyl)imidazole-4-carboxamide: step 1/1. The chain is Bifunctional purine biosynthesis protein PurH from Herminiimonas arsenicoxydans.